Reading from the N-terminus, the 140-residue chain is MAENRESRGTVEAELDPVEYTLRKRLPHRLPRRPNDIYVNMKTDFKAQLARCQKLLDGGARGQNACSEIYIHGLGLAINRAINIALQLQAGSFGSLQVAANTSTVELVDELEPETDSREPLTRIRNNSAIHIRVFRVTPK.

It belongs to the histone-like Alba family. As to quaternary structure, component of nuclear RNase P and RNase MRP complexes. RNase P consists of a catalytic RNA moiety and 10 different protein chains; POP1, POP4, POP5, POP7, RPP14, RPP21, RPP25, RPP30, RPP38 and RPP40. Within the RNase P complex, POP1, POP7 and RPP25 form the 'finger' subcomplex, POP5, RPP14, RPP40 and homodimeric RPP30 form the 'palm' subcomplex, and RPP21, POP4 and RPP38 form the 'wrist' subcomplex. All subunits of the RNase P complex interact with the catalytic RNA. Several subunits of RNase P are also part of the RNase MRP complex. RNase MRP consists of a catalytic RNA moiety and about 8 protein subunits; POP1, POP7, RPP25, RPP30, RPP38, RPP40 and possibly also POP4 and POP5. Interacts with SMN1. POP7 forms a heterodimer with RPP25 that binds to the P3 stem loop of the catalytic RNA.

The protein resides in the nucleus. It localises to the nucleolus. Its subcellular location is the cytoplasm. It is found in the cytoplasmic granule. Its function is as follows. Component of ribonuclease P, a ribonucleoprotein complex that generates mature tRNA molecules by cleaving their 5'-ends. Also a component of the MRP ribonuclease complex, which cleaves pre-rRNA sequences. This chain is Ribonuclease P protein subunit p20 (POP7), found in Bos taurus (Bovine).